We begin with the raw amino-acid sequence, 210 residues long: Proteasome subunit beta (210 aa).

Residues 1–10 (MKELDQLTKG) constitute a propeptide, removed in mature form; by autocatalysis. Catalysis depends on Thr-11, which acts as the Nucleophile.

The protein belongs to the peptidase T1B family. The 20S proteasome core is composed of 14 alpha and 14 beta subunits that assemble into four stacked heptameric rings, resulting in a barrel-shaped structure. The two inner rings, each composed of seven catalytic beta subunits, are sandwiched by two outer rings, each composed of seven alpha subunits. The catalytic chamber with the active sites is on the inside of the barrel. Has a gated structure, the ends of the cylinder being occluded by the N-termini of the alpha-subunits. Is capped at one or both ends by the proteasome regulatory ATPase, PAN.

It localises to the cytoplasm. It catalyses the reaction Cleavage of peptide bonds with very broad specificity.. With respect to regulation, the formation of the proteasomal ATPase PAN-20S proteasome complex, via the docking of the C-termini of PAN into the intersubunit pockets in the alpha-rings, triggers opening of the gate for substrate entry. Interconversion between the open-gate and close-gate conformations leads to a dynamic regulation of the 20S proteasome proteolysis activity. In terms of biological role, component of the proteasome core, a large protease complex with broad specificity involved in protein degradation. The sequence is that of Proteasome subunit beta from Methanopyrus kandleri (strain AV19 / DSM 6324 / JCM 9639 / NBRC 100938).